We begin with the raw amino-acid sequence, 118 residues long: uncharacterized protein (118 aa).

The first 22 residues, 1–22 (MKMSYLRSGIVGFLAGASLSYA), serve as a signal peptide directing secretion. The stretch at 41 to 71 (TATEALETDKQLYKKIEKKIEELESSCVKKS) forms a coiled coil.

This is an uncharacterized protein from Schizosaccharomyces pombe (strain 972 / ATCC 24843) (Fission yeast).